Consider the following 84-residue polypeptide: Small ribosomal subunit protein bS20 (84 aa).

It belongs to the bacterial ribosomal protein bS20 family.

Its function is as follows. Binds directly to 16S ribosomal RNA. In Limosilactobacillus fermentum (strain NBRC 3956 / LMG 18251) (Lactobacillus fermentum), this protein is Small ribosomal subunit protein bS20.